Here is a 625-residue protein sequence, read N- to C-terminus: UvrABC system protein C (625 aa).

The GIY-YIG domain occupies 13 to 92 (DKPGVYIMKD…IKKHRPKFNI (80 aa)). The UVR domain occupies 204-239 (EDIIKKLEKDMKEAADNLEFERAARIRDKINSLKHI).

The protein belongs to the UvrC family. As to quaternary structure, interacts with UvrB in an incision complex.

The protein resides in the cytoplasm. Functionally, the UvrABC repair system catalyzes the recognition and processing of DNA lesions. UvrC both incises the 5' and 3' sides of the lesion. The N-terminal half is responsible for the 3' incision and the C-terminal half is responsible for the 5' incision. The chain is UvrABC system protein C from Acetivibrio thermocellus (strain ATCC 27405 / DSM 1237 / JCM 9322 / NBRC 103400 / NCIMB 10682 / NRRL B-4536 / VPI 7372) (Clostridium thermocellum).